The chain runs to 456 residues: Serine--tRNA ligase (456 aa).

2 disordered regions span residues 107–130 and 229–253; these read PHSS…GTPP and FLEN…QDDD. Positions 114–125 are enriched in basic and acidic residues; it reads GRSESDNREVRR. Residues 239-248 are compositionally biased toward polar residues; it reads LPSNSNSPQG. 260–262 is an L-serine binding site; sequence TSE. 291–293 contacts ATP; the sequence is RSE. Residue E314 coordinates L-serine. Position 378-381 (378-381) interacts with ATP; sequence EISS. S413 contacts L-serine.

The protein belongs to the class-II aminoacyl-tRNA synthetase family. Type-1 seryl-tRNA synthetase subfamily. As to quaternary structure, homodimer. The tRNA molecule binds across the dimer.

It is found in the cytoplasm. The catalysed reaction is tRNA(Ser) + L-serine + ATP = L-seryl-tRNA(Ser) + AMP + diphosphate + H(+). It carries out the reaction tRNA(Sec) + L-serine + ATP = L-seryl-tRNA(Sec) + AMP + diphosphate + H(+). The protein operates within aminoacyl-tRNA biosynthesis; selenocysteinyl-tRNA(Sec) biosynthesis; L-seryl-tRNA(Sec) from L-serine and tRNA(Sec): step 1/1. Its function is as follows. Catalyzes the attachment of serine to tRNA(Ser). Is also able to aminoacylate tRNA(Sec) with serine, to form the misacylated tRNA L-seryl-tRNA(Sec), which will be further converted into selenocysteinyl-tRNA(Sec). The protein is Serine--tRNA ligase of Nitrosospira multiformis (strain ATCC 25196 / NCIMB 11849 / C 71).